The primary structure comprises 210 residues: Isomeliandiol synthase ISM1 (210 aa).

The next 5 membrane-spanning stretches (helical) occupy residues 17-37 (FTLH…TWFI), 50-70 (LLCW…YFVF), 107-127 (IEGM…YAIV), 135-155 (ILQF…FLTA), and 172-192 (YYVG…INFW). Residues 46–188 (GDRLLLCWWA…IWIIVPSLIA (143 aa)) enclose the EXPERA domain.

Belongs to the EBP family.

It is found in the membrane. It carries out the reaction 7,8-epoxymelianol = isomeliandiol. Its pathway is secondary metabolite biosynthesis; terpenoid biosynthesis. Functionally, isomerase involved in the biosynthesis of limonoids and quassinoids triterpene natural products such as ailanthone, chaparrinone, glaucarubinone and amarolide, allelopathic degraded triterpene lactones inhibiting the growth of other plants, and possessing antimalarial, antifeedant, insecticidal, anti-inflammatory and anticancer activities. Catalyzes the conversion of 7,8-epoxymelianol to isomeliandiol via skeletal rearrangements. This Ailanthus altissima (Tree-of-heaven) protein is Isomeliandiol synthase ISM1.